We begin with the raw amino-acid sequence, 323 residues long: MRTATLYRYSVPMEAGVILRHQRLKSRDGLLVKLQQGELSGWGEIAPLPEFSQETLDQAQVAAECWLQHWVSGVESDDSVLPSVAFGLSCAQAELNQTLPLSADYRKAPLCTGDPDELFAVLQALPGEKVAKVKVGLYEAVRDGMIVNVLLEALPDLTLRLDANRSWSRAKADGFAKYVNPALRSRIAFLEEPCKTRAESREFAQDTGIAIAWDESVREADFQVEAEPGVAAIVIKPTLVGSLSRCQQLVQQAHQAGLVAVISSSIESSLGLTQLARLAAWLTPATVPGLDTLDLMQAQVVRPWPDSPLPLITTEQLGVVWHR.

K134 (proton donor) is an active-site residue. Residues D162, E191, and D214 each coordinate Mg(2+). K236 acts as the Proton acceptor in catalysis.

It belongs to the mandelate racemase/muconate lactonizing enzyme family. MenC type 1 subfamily. It depends on a divalent metal cation as a cofactor.

It catalyses the reaction (1R,6R)-6-hydroxy-2-succinyl-cyclohexa-2,4-diene-1-carboxylate = 2-succinylbenzoate + H2O. It participates in quinol/quinone metabolism; 1,4-dihydroxy-2-naphthoate biosynthesis; 1,4-dihydroxy-2-naphthoate from chorismate: step 4/7. Its pathway is quinol/quinone metabolism; menaquinone biosynthesis. In terms of biological role, converts 2-succinyl-6-hydroxy-2,4-cyclohexadiene-1-carboxylate (SHCHC) to 2-succinylbenzoate (OSB). This Yersinia pseudotuberculosis serotype O:1b (strain IP 31758) protein is o-succinylbenzoate synthase.